A 168-amino-acid polypeptide reads, in one-letter code: Mediator of RNA polymerase II transcription subunit 7a (168 aa).

Coiled coils occupy residues 64-92 (KDSN…ADVL) and 132-166 (IMEL…LTLD).

Belongs to the Mediator complex subunit 7 family. As to quaternary structure, component of the Mediator complex. Interacts with MEE14/CBP1.

The protein resides in the nucleus. Functionally, component of the Mediator complex, a coactivator involved in the regulated transcription of nearly all RNA polymerase II-dependent genes. Mediator functions as a bridge to convey information from gene-specific regulatory proteins to the basal RNA polymerase II transcription machinery. The Mediator complex, having a compact conformation in its free form, is recruited to promoters by direct interactions with regulatory proteins and serves for the assembly of a functional pre-initiation complex with RNA polymerase II and the general transcription factors. This is Mediator of RNA polymerase II transcription subunit 7a (MED7A) from Arabidopsis thaliana (Mouse-ear cress).